Consider the following 98-residue polypeptide: Acylphosphatase (98 aa).

Residues 12–98 (TYYVRVRGVV…ERRFDRFQQQ (87 aa)) form the Acylphosphatase-like domain. Catalysis depends on residues Arg27 and Asn45.

Belongs to the acylphosphatase family.

The catalysed reaction is an acyl phosphate + H2O = a carboxylate + phosphate + H(+). The sequence is that of Acylphosphatase (acyP) from Burkholderia ambifaria (strain ATCC BAA-244 / DSM 16087 / CCUG 44356 / LMG 19182 / AMMD) (Burkholderia cepacia (strain AMMD)).